A 125-amino-acid chain; its full sequence is Ino eighty subunit 5 (125 aa).

Threonine 124 is subject to Phosphothreonine.

As to quaternary structure, component of the chromatin-remodeling INO80 complex, at least composed of ARP4, ARP5, ARP8, RVB1, RVB2, TAF14, NHP10, IES1, IES3, IES4, IES6, ACT1, IES2, IES5 and INO80.

The protein resides in the nucleus. This chain is Ino eighty subunit 5 (IES5), found in Saccharomyces cerevisiae (strain ATCC 204508 / S288c) (Baker's yeast).